Reading from the N-terminus, the 214-residue chain is Probable GTP-binding protein EngB (214 aa).

The 173-residue stretch at Ser-40 to His-212 folds into the EngB-type G domain. GTP is bound by residues Gly-48 to Ser-55, Gly-75 to Gln-79, Asp-93 to Gly-96, Thr-160 to Asp-163, and Val-191 to Ser-193. The Mg(2+) site is built by Ser-55 and Thr-77.

This sequence belongs to the TRAFAC class TrmE-Era-EngA-EngB-Septin-like GTPase superfamily. EngB GTPase family. Requires Mg(2+) as cofactor.

In terms of biological role, necessary for normal cell division and for the maintenance of normal septation. The sequence is that of Probable GTP-binding protein EngB from Rickettsia prowazekii (strain Madrid E).